The following is a 343-amino-acid chain: E3 ubiquitin-protein ligase SP1 (343 aa).

Residues methionine 1–arginine 21 traverse the membrane as a helical segment. At serine 22–arginine 222 the chain is on the chloroplast intermembrane side. Residues leucine 223–isoleucine 244 traverse the membrane as a helical segment. Topologically, residues aspartate 245 to histidine 343 are cytoplasmic. The segment at cysteine 296–arginine 331 adopts an RING-type zinc-finger fold.

As to quaternary structure, interacts with TOC33, TOC75-3 and TOC159. Post-translationally, auto-ubiquitinated.

Its subcellular location is the plastid. It localises to the chloroplast outer membrane. The catalysed reaction is S-ubiquitinyl-[E2 ubiquitin-conjugating enzyme]-L-cysteine + [acceptor protein]-L-lysine = [E2 ubiquitin-conjugating enzyme]-L-cysteine + N(6)-ubiquitinyl-[acceptor protein]-L-lysine.. It participates in protein modification; protein ubiquitination. Its function is as follows. E3 ubiquitin-protein ligase involved in the regulation of protein import in the chloroplast. Associates with TOC complexes and mediates ubiquitination of TOC components, promoting their degradation via the ubiquitin-proteasome system (UPS). Plays a role in the reorganization of the TOC machinery. Involved in a mechanism that regulates plastid biogenesis via UPS. Promotes stress tolerance by depleting the chloroplast protein import apparatus, which limits photosystem assembly and the potential for reactive oxygen species (ROS) formation. May act as negative regulator of programmed cell death (PCD) during biotic stress. The sequence is that of E3 ubiquitin-protein ligase SP1 from Arabidopsis thaliana (Mouse-ear cress).